The sequence spans 1435 residues: Cardiac-enriched FHL2-interacting protein (1435 aa).

4 disordered regions span residues 109-176 (EEKY…PPKF), 203-234 (SNTH…GSSS), 250-270 (FPSP…GTFL), and 291-311 (KDTA…DTTL). A Phosphothreonine modification is found at Thr120. Residues 133 to 147 (LRSSNKPVSKVSTLI) are compositionally biased toward polar residues. The span at 149–160 (SFDRTESQRCES) shows a compositional bias: basic and acidic residues. Ser323 is subject to Phosphoserine. Disordered stretches follow at residues 362 to 592 (EGKA…LTLS), 609 to 772 (AERS…EKEN), 795 to 847 (SQGE…SPSS), 1007 to 1108 (PEGD…ARVT), 1138 to 1261 (SPRG…PGGP), and 1363 to 1435 (QGPR…EGIS). Residues 389-402 (KGKESLQDTLEEKT) show a composition bias toward basic and acidic residues. A Phosphoserine modification is found at Ser470. 4 stretches are compositionally biased toward basic and acidic residues: residues 479–493 (QEKE…DSYK), 522–535 (VLDE…DGKQ), 609–620 (AERSSYENKEVE), and 650–667 (CNRD…KTHQ). A compositionally biased stretch (polar residues) spans 668–679 (LENGLSRSVSQE). Over residues 727-741 (KFSTSSSDQSFASFD) the composition is skewed to low complexity. The span at 751–772 (NQREDRRKDVSAGDSQKDEKEN) shows a compositional bias: basic and acidic residues. Ser816 carries the phosphoserine modification. A compositionally biased stretch (polar residues) spans 831–847 (KGTTFSQAKDLTPSPSS). The segment covering 1055 to 1066 (NSPNPGSPGESS) has biased composition (low complexity). Over residues 1067 to 1082 (ACSPAASNIWEESSQA) the composition is skewed to polar residues. Residues 1083–1093 (PGGPELLPEEP) are compositionally biased toward low complexity. A compositionally biased stretch (polar residues) spans 1094 to 1105 (NQASPWASSSPA). A compositionally biased stretch (basic residues) spans 1182 to 1193 (RRAKKLASKRRK). Over residues 1194 to 1211 (TDQAQEKHGESQEGKPCP) the composition is skewed to basic and acidic residues. Acidic residues predominate over residues 1424–1435 (DDLEDFATEGIS).

As to quaternary structure, interacts with FHL2. In terms of tissue distribution, expressed in the heart and skeletal muscle.

It localises to the cytoplasm. The protein resides in the myofibril. It is found in the sarcomere. Its subcellular location is the z line. Plays an important role in cardiomyocyte hypertrophy via activation of the calcineurin/NFAT signaling pathway. The sequence is that of Cardiac-enriched FHL2-interacting protein from Homo sapiens (Human).